Reading from the N-terminus, the 583-residue chain is Glucosidase 2 subunit beta (583 aa).

The N-terminal stretch at 1–26 (MVRLNLAVVALAAGALSASASASSSA) is a signal peptide. Residues Cys-91 and Cys-115 are joined by a disulfide bond. Residues 130–252 (NRCEKVGKEY…LTLLLDDLAK (123 aa)) adopt a coiled-coil conformation. Residues 455 to 562 (NKCFSKDMGE…KVATPAVCFP (108 aa)) form the MRH domain. Disulfide bonds link Cys-457-Cys-470, Cys-519-Cys-548, and Cys-533-Cys-560. Positions 580–583 (KDEL) match the Prevents secretion from ER motif.

In terms of assembly, heterodimer of a catalytic subunit alpha and a subunit beta.

The protein localises to the endoplasmic reticulum. Functionally, subunit of glucosidase 2, which cleaves sequentially the 2 innermost alpha-1,3-linked glucose residues from the Glc(2)Man(9)GlcNAc(2) oligosaccharide precursor of immature glycoproteins in the endoplasmic reticulum (ER). Specifically required for the cleavage of the final glucose. The subunit beta retains the catalytic subunit alpha in the ER. This chain is Glucosidase 2 subunit beta, found in Mycosarcoma maydis (Corn smut fungus).